A 38-amino-acid chain; its full sequence is Antifungal protein 5 (38 aa).

Belongs to the plant LTP family.

In terms of biological role, possesses potent antifungal activity against F.graminearum but not P.infestans. The polypeptide is Antifungal protein 5 (Malva parviflora (Little mallow)).